A 154-amino-acid chain; its full sequence is uncharacterized protein (154 aa).

Residues 1 to 143 (MTESERALLT…LRKLAGSLTK (143 aa)) enclose the HTH marR-type domain. The H-T-H motif DNA-binding region spans 57–80 (LSKLAMSLDLKPASVTRMTDILYK).

This is an uncharacterized protein from Bacillus subtilis (strain 168).